The chain runs to 276 residues: Ribonuclease 3 (276 aa).

Residues 30-161 (LTAFIRSLFK…LTGAIYLDRG (132 aa)) form the RNase III domain. Glu-74 contributes to the Mg(2+) binding site. The active site involves Asp-78. Asp-147 and Glu-150 together coordinate Mg(2+). Glu-150 is a catalytic residue. In terms of domain architecture, DRBM spans 188-257 (NHKSRLIEHT…AEEAMGALER (70 aa)).

It belongs to the ribonuclease III family. As to quaternary structure, homodimer. It depends on Mg(2+) as a cofactor.

It is found in the cytoplasm. It carries out the reaction Endonucleolytic cleavage to 5'-phosphomonoester.. Its function is as follows. Digests double-stranded RNA. Involved in the processing of primary rRNA transcript to yield the immediate precursors to the large and small rRNAs (23S and 16S). Processes some mRNAs, and tRNAs when they are encoded in the rRNA operon. Processes pre-crRNA and tracrRNA of type II CRISPR loci if present in the organism. In Chlorobium luteolum (strain DSM 273 / BCRC 81028 / 2530) (Pelodictyon luteolum), this protein is Ribonuclease 3.